Consider the following 425-residue polypeptide: UPF0597 protein VSAL_I0741 (425 aa).

The protein belongs to the UPF0597 family.

This chain is UPF0597 protein VSAL_I0741, found in Aliivibrio salmonicida (strain LFI1238) (Vibrio salmonicida (strain LFI1238)).